The sequence spans 311 residues: Methionyl-tRNA formyltransferase (311 aa).

Residue 110–113 (SLLP) participates in (6S)-5,6,7,8-tetrahydrofolate binding.

It belongs to the Fmt family.

The enzyme catalyses L-methionyl-tRNA(fMet) + (6R)-10-formyltetrahydrofolate = N-formyl-L-methionyl-tRNA(fMet) + (6S)-5,6,7,8-tetrahydrofolate + H(+). Attaches a formyl group to the free amino group of methionyl-tRNA(fMet). The formyl group appears to play a dual role in the initiator identity of N-formylmethionyl-tRNA by promoting its recognition by IF2 and preventing the misappropriation of this tRNA by the elongation apparatus. The polypeptide is Methionyl-tRNA formyltransferase (Acidobacterium capsulatum (strain ATCC 51196 / DSM 11244 / BCRC 80197 / JCM 7670 / NBRC 15755 / NCIMB 13165 / 161)).